We begin with the raw amino-acid sequence, 647 residues long: Exoribonuclease 2 (647 aa).

The region spanning 192 to 519 (RIDLTSLDFV…NHRLLKAIIQ (328 aa)) is the RNB domain. Residues 564-646 (EQRFTAEIID…ETRNIVARPT (83 aa)) form the S1 motif domain.

Belongs to the RNR ribonuclease family. RNase II subfamily.

The protein resides in the cytoplasm. It catalyses the reaction Exonucleolytic cleavage in the 3'- to 5'-direction to yield nucleoside 5'-phosphates.. In terms of biological role, involved in mRNA degradation. Hydrolyzes single-stranded polyribonucleotides processively in the 3' to 5' direction. In Photorhabdus laumondii subsp. laumondii (strain DSM 15139 / CIP 105565 / TT01) (Photorhabdus luminescens subsp. laumondii), this protein is Exoribonuclease 2.